A 218-amino-acid polypeptide reads, in one-letter code: Small ribosomal subunit protein uS3c (218 aa).

Residues 39-118 (IRNFIKNYVQ…KLNIAITRIA (80 aa)) enclose the KH type-2 domain.

It belongs to the universal ribosomal protein uS3 family. Part of the 30S ribosomal subunit.

The protein localises to the plastid. The protein resides in the chloroplast. In Ipomoea purpurea (Common morning glory), this protein is Small ribosomal subunit protein uS3c (rps3).